Reading from the N-terminus, the 89-residue chain is Small ribosomal subunit protein uS15 (89 aa).

This sequence belongs to the universal ribosomal protein uS15 family. As to quaternary structure, part of the 30S ribosomal subunit. Forms a bridge to the 50S subunit in the 70S ribosome, contacting the 23S rRNA.

In terms of biological role, one of the primary rRNA binding proteins, it binds directly to 16S rRNA where it helps nucleate assembly of the platform of the 30S subunit by binding and bridging several RNA helices of the 16S rRNA. Functionally, forms an intersubunit bridge (bridge B4) with the 23S rRNA of the 50S subunit in the ribosome. The sequence is that of Small ribosomal subunit protein uS15 from Bacillus pumilus (strain SAFR-032).